A 2604-amino-acid polypeptide reads, in one-letter code: BEACH domain-containing protein B (2604 aa).

In terms of domain architecture, BEACH-type PH spans 1761-1912; sequence VGTSEVLTSV…NAKEVGMLIV (152 aa). Residues 1936-2226 form the BEACH domain; it reads DRRIAMEMAE…QIFRKKHPRR (291 aa). WD repeat units lie at residues 2254–2293, 2368–2407, 2433–2474, 2476–2515, 2516–2557, and 2558–2596; these read HSPS…SGGN, HHKD…TPEK, GHDD…RSLK, PSGS…LASS, ESNG…KRYN, and GAGK…HRKP.

In terms of biological role, may be involved in the suppression of BCHC1 activity. In Arabidopsis thaliana (Mouse-ear cress), this protein is BEACH domain-containing protein B.